The following is a 483-amino-acid chain: MLTLDTLNVMLAVSEEGLIEEMIIALLASPQLAVFFEKFPRLKAAITDDVPRWREALRSRLKDARVPPELTEEVMCYQQSQLLSTPQFIVQLPQILDLLHRLNSPWAEQARQLVDANSTITSALHTLFLQRWRLSLIVQATTLNQQLLEEEREQLLSEVQERMTLSGQLEPILADNNTAAGRLWDMSAGQLKRGDYQFIVKYGEFLNEQPELKRLAEQLGRSREAKSIPRNDAQMETFRTMVREPATVPEQVDGLQQSDDILRLLPPELATLGITELEYEFYRRLVEKQLLTYRLHGESWREKVLERPVVHKDYDEQPRGPFIVCVDTSGSMGGFNEQCAKAFCLALMRIALAENRRCYIMLFSTEIVRYELSGPQGIEQAIRFLSQQFRGGTDLASCFRAIMERLQSREWFDADAVVISDFIAQRLPDDVTSKVKELQRVHQHRFHAVAMSAHGKPGIMRIFDHIWRFDTGMRSRLLRRWRR.

Belongs to the ViaA family. In terms of assembly, homodimer. Interacts with RavA.

It localises to the cytoplasm. Component of the RavA-ViaA chaperone complex, which may act on the membrane to optimize the function of some of the respiratory chains. ViaA stimulates the ATPase activity of RavA. This is Regulatory protein ViaA from Shigella flexneri serotype 5b (strain 8401).